The following is a 239-amino-acid chain: Tetraspanin-9 (239 aa).

Topologically, residues 1–13 (MARGCLCCLKYMM) are cytoplasmic. The chain crosses the membrane as a helical span at residues 14–34 (FLFNLIFWLCGCGLLGVGIWL). Topologically, residues 35–55 (SVSQGNFATFSPSFPSLSAAN) are extracellular. The helical transmembrane segment at 56–76 (LVIAIGTIVMVTGFLGCLGAI) threads the bilayer. The Cytoplasmic portion of the chain corresponds to 77-85 (KENKCLLLS). A helical membrane pass occupies residues 86–106 (FFIVLLVILLAELILLILFFV). Topologically, residues 107-203 (YMDKVNENAK…VKMWFDDNKH (97 aa)) are extracellular. N-linked (GlcNAc...) asparagine glycosylation occurs at N180. Residues 204–224 (VLGTVGMCILIMQILGMAFSM) traverse the membrane as a helical segment. The Cytoplasmic portion of the chain corresponds to 225-239 (TLFQHIHRTGKKYDA).

The protein belongs to the tetraspanin (TM4SF) family. Found in a complex with GP6. In terms of processing, glycosylated. As to expression, expressed in megakaryocytes and platelets (at protein level).

The protein localises to the membrane. The sequence is that of Tetraspanin-9 (TSPAN9) from Homo sapiens (Human).